Here is a 73-residue protein sequence, read N- to C-terminus: ISALVSFLPILMHWWRAENDEARRCYNDPKCCDFVTNRAYAIASSVVSFYVPLCIMAFVYLRVFREAQKQVKK.

Residues 1 to 12 (ISALVSFLPILM) traverse the membrane as a helical segment. Residues 13–38 (HWWRAENDEARRCYNDPKCCDFVTNR) are Extracellular-facing. Cysteine 25 and cysteine 31 are oxidised to a cystine. A helical transmembrane segment spans residues 39 to 64 (AYAIASSVVSFYVPLCIMAFVYLRVF). Position 44 (serine 44) interacts with cyanopindolol. Residues 65–73 (REAQKQVKK) lie on the Cytoplasmic side of the membrane.

It belongs to the G-protein coupled receptor 1 family. Adrenergic receptor subfamily. ADRB1 sub-subfamily. As to quaternary structure, interacts (via C-terminus PDZ motif) with RAPGEF2; the interaction is direct. Interacts with GOPC, MAGI3 and DLG4. Homologous desensitization of the receptor is mediated by its phosphorylation by beta-adrenergic receptor kinase.

It localises to the cell membrane. It is found in the early endosome. Beta-adrenergic receptors mediate the catecholamine-induced activation of adenylate cyclase through the action of G proteins. This receptor binds epinephrine and norepinephrine with approximately equal affinity. Mediates Ras activation through G(s)-alpha- and cAMP-mediated signaling. In dorsal pons neurons, involved in the regulation of sleep/wake behaviors. The protein is Beta-1 adrenergic receptor (ADRB1) of Meriones unguiculatus (Mongolian jird).